The following is a 63-amino-acid chain: Prokaryotic ubiquitin-like protein Pup (63 aa).

A disordered region spans residues Met1–Thr35. The tract at residues Asp19–Tyr57 is ARC ATPase binding. Glu63 is covalently cross-linked (Isoglutamyl lysine isopeptide (Glu-Lys) (interchain with K-? in acceptor proteins)).

The protein belongs to the prokaryotic ubiquitin-like protein family. In terms of assembly, strongly interacts with the proteasome-associated ATPase ARC through a hydrophobic interface; the interacting region of Pup lies in its C-terminal half. There is one Pup binding site per ARC hexamer ring.

It participates in protein degradation; proteasomal Pup-dependent pathway. In terms of biological role, protein modifier that is covalently attached to lysine residues of substrate proteins, thereby targeting them for proteasomal degradation. The tagging system is termed pupylation. This Corynebacterium aurimucosum (strain ATCC 700975 / DSM 44827 / CIP 107346 / CN-1) (Corynebacterium nigricans) protein is Prokaryotic ubiquitin-like protein Pup.